The chain runs to 67 residues: Large ribosomal subunit protein uL29 (67 aa).

It belongs to the universal ribosomal protein uL29 family.

This Cereibacter sphaeroides (strain ATCC 17025 / ATH 2.4.3) (Rhodobacter sphaeroides) protein is Large ribosomal subunit protein uL29.